The chain runs to 340 residues: MKADVQEIRQGYGEIRLFPESVDDIWHLSHLIAPGDLVFAQTFRSVETATDKLRPEKAEKRPVRIGIRVEKVEFHQYSSRLRVTGLIESGPDVGSYHTLNLEPNFEVSVIRFWSKSDRERVDRAVNSSGSGLVHVLAIEEGEAELFRIRQYGPEQVLTITMGSGKGAPVDSREGFFIEAATPLLQITGPVIIAGPGFIKDDFARFLKNRYPAIAANSMVVETRRIGRGAVQEVIGQGVIGKIAGDLQLGREVQVMDEVLKRIAMEGLITYGRAEVGQAISFGAADQVIVSDRLIRDPEVARLMEQAEQMNATVTVLSSCFEPGERLWALGGIAALLRYAL.

The protein belongs to the eukaryotic release factor 1 family. Pelota subfamily. In terms of assembly, monomer. It depends on a divalent metal cation as a cofactor.

It localises to the cytoplasm. Functionally, may function in recognizing stalled ribosomes, interact with stem-loop structures in stalled mRNA molecules, and effect endonucleolytic cleavage of the mRNA. May play a role in the release non-functional ribosomes and degradation of damaged mRNAs. Has endoribonuclease activity. This Methanosphaerula palustris (strain ATCC BAA-1556 / DSM 19958 / E1-9c) protein is Protein pelota homolog.